The following is an 83-amino-acid chain: Cardiotoxin 7'' (83 aa).

The signal sequence occupies residues 1-21; sequence MKTLLLTLVVVTIVCLDLGYT. Disulfide bonds link cysteine 24-cysteine 43, cysteine 36-cysteine 61, cysteine 65-cysteine 76, and cysteine 77-cysteine 82.

This sequence belongs to the three-finger toxin family. Short-chain subfamily. Orphan group XV sub-subfamily. Expressed by the venom gland.

It is found in the secreted. The protein resides in the target cell membrane. Has low cytotoxic activity. The polypeptide is Cardiotoxin 7'' (Naja atra (Chinese cobra)).